Reading from the N-terminus, the 189-residue chain is Large ribosomal subunit protein uL5 (189 aa).

The protein belongs to the universal ribosomal protein uL5 family. As to quaternary structure, part of the 50S ribosomal subunit; part of the 5S rRNA/L5/L18/L25 subcomplex. Contacts the 5S rRNA and the P site tRNA. Forms a bridge to the 30S subunit in the 70S ribosome.

This is one of the proteins that bind and probably mediate the attachment of the 5S RNA into the large ribosomal subunit, where it forms part of the central protuberance. In the 70S ribosome it contacts protein S13 of the 30S subunit (bridge B1b), connecting the 2 subunits; this bridge is implicated in subunit movement. Contacts the P site tRNA; the 5S rRNA and some of its associated proteins might help stabilize positioning of ribosome-bound tRNAs. The polypeptide is Large ribosomal subunit protein uL5 (Corynebacterium jeikeium (strain K411)).